The following is an 875-amino-acid chain: Neurotrypsin (875 aa).

The signal sequence occupies residues 1–20; that stretch reads MTLARFVLALVLGALPEVVG. Residue N26 is glycosylated (N-linked (GlcNAc...) asparagine). Residues 30–87 are disordered; sequence HHRHRHSPPPGPQYPYYLPTHQRPPRTRPPPPLPRFPRPPRALPAQRPHALQAGHTPR. Residues 56–71 show a composition bias toward pro residues; that stretch reads TRPPPPLPRFPRPPRA. The region spanning 93–165 is the Kringle domain; the sequence is CPAGELWVSV…GKVDWGYCDC (73 aa). Cystine bridges form between C93-C165, C109-C149, C138-C163, C195-C259, C208-C269, C239-C249, C305-C369, C318-C379, C349-C359, C412-C475, C425-C485, C455-C465, C525-C589, C538-C599, C569-C579, C619-C750, C661-C677, C765-C831, C794-C808, and C821-C850. SRCR domains are found at residues 170 to 271, 280 to 381, 387 to 487, and 500 to 601; these read VRLR…TCSF, IRLV…SCTP, IRLA…ACYP, and VRLM…ICDY. Residues 619–630 are zymogen activation region; that stretch reads CGLRLLHRRQKR. Positions 631-874 constitute a Peptidase S1 domain; that stretch reads IIGGKNSLRG…FVPWIKSVTK (244 aa). H676 (charge relay system) is an active-site residue. N683 carries an N-linked (GlcNAc...) asparagine glycan. D726 serves as the catalytic Charge relay system. Catalysis depends on S825, which acts as the Charge relay system.

It belongs to the peptidase S1 family.

It is found in the secreted. Functionally, plays a role in neuronal plasticity and the proteolytic action may subserve structural reorganizations associated with learning and memory operations. The sequence is that of Neurotrypsin (PRSS12) from Macaca mulatta (Rhesus macaque).